The chain runs to 284 residues: Tropomyosin (284 aa).

The disordered stretch occupies residues 1-41; it reads MDAIKKKMQAMKLEKDNAVDRAETAEQQSRDAALRAEKAEE. A coiled-coil region spans residues 1–284; it reads MDAIKKKMQA…DQTFSELTGY (284 aa). Residues 12 to 41 show a composition bias toward basic and acidic residues; the sequence is KLEKDNAVDRAETAEQQSRDAALRAEKAEE.

It belongs to the tropomyosin family. As to quaternary structure, homodimer.

Tropomyosin, in association with the troponin complex, plays a central role in the calcium dependent regulation of muscle contraction. The protein is Tropomyosin of Haemaphysalis longicornis (Bush tick).